Reading from the N-terminus, the 120-residue chain is NAD(P)H-quinone oxidoreductase subunit 3, chloroplastic (120 aa).

3 consecutive transmembrane segments (helical) span residues 10 to 30 (FWVF…ISGV), 64 to 84 (IFAL…PWAM), and 88 to 108 (VLGV…IVGS).

The protein belongs to the complex I subunit 3 family. NDH is composed of at least 16 different subunits, 5 of which are encoded in the nucleus.

Its subcellular location is the plastid. It localises to the chloroplast thylakoid membrane. The enzyme catalyses a plastoquinone + NADH + (n+1) H(+)(in) = a plastoquinol + NAD(+) + n H(+)(out). It carries out the reaction a plastoquinone + NADPH + (n+1) H(+)(in) = a plastoquinol + NADP(+) + n H(+)(out). NDH shuttles electrons from NAD(P)H:plastoquinone, via FMN and iron-sulfur (Fe-S) centers, to quinones in the photosynthetic chain and possibly in a chloroplast respiratory chain. The immediate electron acceptor for the enzyme in this species is believed to be plastoquinone. Couples the redox reaction to proton translocation, and thus conserves the redox energy in a proton gradient. This chain is NAD(P)H-quinone oxidoreductase subunit 3, chloroplastic, found in Pelargonium hortorum (Common geranium).